Reading from the N-terminus, the 130-residue chain is uncharacterized protein (130 aa).

This is an uncharacterized protein from Pyrococcus horikoshii (strain ATCC 700860 / DSM 12428 / JCM 9974 / NBRC 100139 / OT-3).